The chain runs to 447 residues: tRNA-2-methylthio-N(6)-dimethylallyladenosine synthase (447 aa).

An MTTase N-terminal domain is found at 10–128 (KLFCISTYGC…FPEYLHRVLQ (119 aa)). Cys-19, Cys-55, Cys-89, Cys-165, Cys-169, and Cys-172 together coordinate [4Fe-4S] cluster. The Radical SAM core domain occupies 151–382 (RKSDVKAFVT…EAINKKVVIK (232 aa)). In terms of domain architecture, TRAM spans 384 to 447 (KEYEGKVVEV…PFSLIGEIVE (64 aa)).

This sequence belongs to the methylthiotransferase family. MiaB subfamily. In terms of assembly, monomer. [4Fe-4S] cluster is required as a cofactor.

It is found in the cytoplasm. It catalyses the reaction N(6)-dimethylallyladenosine(37) in tRNA + (sulfur carrier)-SH + AH2 + 2 S-adenosyl-L-methionine = 2-methylsulfanyl-N(6)-dimethylallyladenosine(37) in tRNA + (sulfur carrier)-H + 5'-deoxyadenosine + L-methionine + A + S-adenosyl-L-homocysteine + 2 H(+). Functionally, catalyzes the methylthiolation of N6-(dimethylallyl)adenosine (i(6)A), leading to the formation of 2-methylthio-N6-(dimethylallyl)adenosine (ms(2)i(6)A) at position 37 in tRNAs that read codons beginning with uridine. This is tRNA-2-methylthio-N(6)-dimethylallyladenosine synthase from Clostridium perfringens (strain SM101 / Type A).